Consider the following 266-residue polypeptide: MWWFQQGLSFLPSALVIWTAAAFIFSYITAITLHHVDPVLPYISDTGTVAPEKCLFGAMLNIAAVLCVATIYVRYKQVHALNPEENRIIRLNKAGLVLGLLSCLGLSLVANFQKTTFFAVHVCGAVLTFGMGSLYMFVQTILSYQMQPKIHGKQVFWIRLLLVIWCGVSAFSMLTCSSLLYNGSFGADIVQKLHWNPEDKGYVLHMITTAAEWSMSLSFFGFFLTYIRDFQKISLRVEATLHGLTLYDTAPCPVNNERTWLLSRDV.

6 helical membrane-spanning segments follow: residues 8–28, 53–73, 92–112, 117–137, 160–180, and 207–227; these read LSFLPSALVIWTAAAFIFSYI, KCLFGAMLNIAAVLCVATIYV, NKAGLVLGLLSCLGLSLVANF, FFAVHVCGAVLTFGMGSLYMF, LLLVIWCGVSAFSMLTCSSLL, and ITTAAEWSMSLSFFGFFLTYI.

Belongs to the DRAM/TMEM150 family.

It is found in the lysosome membrane. Its subcellular location is the photoreceptor inner segment. The protein resides in the apical cell membrane. In terms of biological role, plays a role in the initiation of autophagy. In the retina, might be involved in the process of photoreceptor cells renewal and recycling to preserve visual function. Induces apoptotic cell death when coexpressed with DRAM1. This chain is DNA damage-regulated autophagy modulator protein 2 (DRAM2), found in Bos taurus (Bovine).